Consider the following 161-residue polypeptide: RNA pyrophosphohydrolase (161 aa).

The Nudix hydrolase domain occupies 6 to 149 (GYRPNVGIIL…KKDVYRRALK (144 aa)). A Nudix box motif is present at residues 38–59 (GGIKSDETPEEALFRELKEEVG).

The protein belongs to the Nudix hydrolase family. RppH subfamily. It depends on a divalent metal cation as a cofactor.

Accelerates the degradation of transcripts by removing pyrophosphate from the 5'-end of triphosphorylated RNA, leading to a more labile monophosphorylated state that can stimulate subsequent ribonuclease cleavage. The sequence is that of RNA pyrophosphohydrolase from Marinomonas sp. (strain MWYL1).